The following is a 528-amino-acid chain: Calcium-dependent protein kinase 17 (528 aa).

Positions 1–65 (MGNCCSHGRD…GPIGPVLGRP (65 aa)) are disordered. Residue G2 is the site of N-myristoyl glycine attachment. Residues 20 to 45 (NGASASNAANSTGPTAEASVPQSKHA) are compositionally biased toward low complexity. In terms of domain architecture, Protein kinase spans 73–331 (YSLGKELGRG…AAQVLNHPWI (259 aa)). ATP is bound by residues 79–87 (LGRGQFGVT) and K102. The active-site Proton acceptor is D197. Position 237 is a phosphoserine (S237). An autoinhibitory domain region spans residues 337–367 (APDVPLDNAVMSRLKQFKAMNNFKKVALRVI). EF-hand domains follow at residues 374 to 409 (EEIM…QGTR), 410 to 445 (LSEY…INRL), 446 to 481 (DREE…FGMN), and 485 to 516 (DIKE…GNPD). Ca(2+)-binding residues include D387, D389, S391, T393, E398, D423, D425, N427, T429, E434, D459, D461, S463, Y465, E470, D494, D496, D498, R500, and E505.

This sequence belongs to the protein kinase superfamily. Ser/Thr protein kinase family. CDPK subfamily.

Its subcellular location is the membrane. The enzyme catalyses L-seryl-[protein] + ATP = O-phospho-L-seryl-[protein] + ADP + H(+). It catalyses the reaction L-threonyl-[protein] + ATP = O-phospho-L-threonyl-[protein] + ADP + H(+). Its activity is regulated as follows. Activated by calcium. Autophosphorylation may play an important role in the regulation of the kinase activity. Functionally, may play a role in signal transduction pathways that involve calcium as a second messenger. This is Calcium-dependent protein kinase 17 (CPK17) from Arabidopsis thaliana (Mouse-ear cress).